A 394-amino-acid chain; its full sequence is Cysteine protease ATG4B (394 aa).

Residue C74 is the Nucleophile of the active site. Catalysis depends on residues D280 and H282. An LIR motif is present at residues 389 to 392 (FEIL).

This sequence belongs to the peptidase C54 family.

Its subcellular location is the cytoplasm. It localises to the cytosol. The protein resides in the cytoplasmic vesicle. The protein localises to the autophagosome. It is found in the endoplasmic reticulum. Its subcellular location is the mitochondrion. It carries out the reaction [protein]-C-terminal L-amino acid-glycyl-phosphatidylethanolamide + H2O = [protein]-C-terminal L-amino acid-glycine + a 1,2-diacyl-sn-glycero-3-phosphoethanolamine. The enzyme catalyses [protein]-C-terminal L-amino acid-glycyl-phosphatidylserine + H2O = [protein]-C-terminal L-amino acid-glycine + a 1,2-diacyl-sn-glycero-3-phospho-L-serine. Functionally, cysteine protease that plays a key role in autophagy by mediating both proteolytic activation and delipidation of ATG8 family proteins. Required for canonical autophagy (macroautophagy), non-canonical autophagy as well as for mitophagy. The protease activity is required for proteolytic activation of ATG8 family proteins: cleaves the C-terminal amino acid of ATG8 proteins to reveal a C-terminal glycine. Exposure of the glycine at the C-terminus is essential for ATG8 proteins conjugation to phosphatidylethanolamine (PE) and insertion to membranes, which is necessary for autophagy. Protease activity is also required to counteract formation of high-molecular weight conjugates of ATG8 proteins (ATG8ylation): acts as a deubiquitinating-like enzyme that removes ATG8 conjugated to other proteins, such as ATG3. In addition to the protease activity, also mediates delipidation of ATG8 family proteins. Catalyzes delipidation of PE-conjugated forms of ATG8 proteins during macroautophagy. Also involved in non-canonical autophagy, a parallel pathway involving conjugation of ATG8 proteins to single membranes at endolysosomal compartments, by catalyzing delipidation of ATG8 proteins conjugated to phosphatidylserine (PS). The chain is Cysteine protease ATG4B from Danio rerio (Zebrafish).